We begin with the raw amino-acid sequence, 163 residues long: MGVTKKPDLNDPVLRAKLAKGMGHNYYGEPAWPNDLLYIFPVVILGTIACNGGLAVLEPSMIGEPADPFATPLEILPEWYFFPVFQILRTVPNKLLGVLLMVSVPAGLLTVPFLENVNKFQNPFRRPVATTVFLVGTLVALWLGIGATLPIEKSLTLGLFSIK.

Transmembrane regions (helical) follow at residues 36–56, 95–115, and 131–151; these read LLYI…GLAV, LLGV…PFLE, and TVFL…TLPI.

Belongs to the cytochrome b family. PetD subfamily. As to quaternary structure, the 4 large subunits of the cytochrome b6-f complex are cytochrome b6, subunit IV (17 kDa polypeptide, petD), cytochrome f and the Rieske protein, while the 4 small subunits are petG, petL, petM and petN. The complex functions as a dimer.

The protein resides in the plastid. The protein localises to the chloroplast thylakoid membrane. Component of the cytochrome b6-f complex, which mediates electron transfer between photosystem II (PSII) and photosystem I (PSI), cyclic electron flow around PSI, and state transitions. The protein is Cytochrome b6-f complex subunit 4 of Pelargonium hortorum (Common geranium).